The primary structure comprises 463 residues: Glutamate-1-semialdehyde 2,1-aminomutase, chloroplastic (463 aa).

The transit peptide at 1-30 (MQMQLNAKTVQGAFKAQRPRSVRGNVAVRA) directs the protein to the chloroplast. Lysine 303 is subject to N6-(pyridoxal phosphate)lysine.

Belongs to the class-III pyridoxal-phosphate-dependent aminotransferase family. HemL subfamily. As to quaternary structure, homodimer. The cofactor is pyridoxal 5'-phosphate.

Its subcellular location is the plastid. It localises to the chloroplast. It carries out the reaction (S)-4-amino-5-oxopentanoate = 5-aminolevulinate. It participates in porphyrin-containing compound metabolism; protoporphyrin-IX biosynthesis; 5-aminolevulinate from L-glutamyl-tRNA(Glu): step 2/2. Its pathway is porphyrin-containing compound metabolism; chlorophyll biosynthesis. This is Glutamate-1-semialdehyde 2,1-aminomutase, chloroplastic (GSA) from Chlamydomonas reinhardtii (Chlamydomonas smithii).